The sequence spans 404 residues: Neutral protease 2 homolog AFLA_065450 (404 aa).

An N-terminal signal peptide occupies residues 1–19; that stretch reads MRFISASSLLLALAPTLNA. Positions 20–185 are excised as a propeptide; sequence VPVEVAGSAQ…TQAVKILERR (166 aa). Disulfide bonds link C191/C263 and C270/C288. H313 serves as a coordination point for Zn(2+). The active site involves E314. Zn(2+) is bound by residues H317 and D328.

It belongs to the peptidase M35 family. Zn(2+) is required as a cofactor.

It localises to the secreted. The enzyme catalyses Preferential cleavage of bonds with hydrophobic residues in P1'. Also 3-Asn-|-Gln-4 and 8-Gly-|-Ser-9 bonds in insulin B chain.. Secreted metalloproteinase that allows assimilation of proteinaceous substrates. Shows high activities on basic nuclear substrates such as histone and protamine. The sequence is that of Neutral protease 2 homolog AFLA_065450 from Aspergillus flavus (strain ATCC 200026 / FGSC A1120 / IAM 13836 / NRRL 3357 / JCM 12722 / SRRC 167).